The following is a 344-amino-acid chain: 2,3,4,5-tetrahydropyridine-2,6-dicarboxylate N-succinyltransferase (344 aa).

E205 is a binding site for Mg(2+). Catalysis depends on E221, which acts as the Acyl-anhydride intermediate. Succinyl-CoA-binding positions include R223, G238, S241, A264, 279–280 (EA), G287, K304, and 317–320 (RRNS).

It belongs to the type 2 tetrahydrodipicolinate N-succinyltransferase family. Homotrimer.

The protein localises to the cytoplasm. It carries out the reaction (S)-2,3,4,5-tetrahydrodipicolinate + succinyl-CoA + H2O = (S)-2-succinylamino-6-oxoheptanedioate + CoA. It functions in the pathway amino-acid biosynthesis; L-lysine biosynthesis via DAP pathway; LL-2,6-diaminopimelate from (S)-tetrahydrodipicolinate (succinylase route): step 1/3. Its function is as follows. Catalyzes the conversion of the cyclic tetrahydrodipicolinate (THDP) into the acyclic N-succinyl-L-2-amino-6-oxopimelate using succinyl-CoA. The sequence is that of 2,3,4,5-tetrahydropyridine-2,6-dicarboxylate N-succinyltransferase from Pseudomonas paraeruginosa (strain DSM 24068 / PA7) (Pseudomonas aeruginosa (strain PA7)).